We begin with the raw amino-acid sequence, 205 residues long: Protein Nef (205 aa).

Gly2 carries N-myristoyl glycine; by host lipidation. Ser6 carries the post-translational modification Phosphoserine; by host. Residues 62-65 (EEEE) are acidic; interacts with host PACS1 and PACS2; stabilizes the interaction of NEF/MHC-I with host AP1M1; necessary for MHC-I internalization. The tract at residues 69-78 (PVTPQVPLRP) is SH3-binding; interaction with Src family tyrosine kinases. The PxxP; stabilizes the interaction of NEF/MHC-I with host AP1M1; necessary for MHC-I internalization motif lies at 72 to 75 (PQVP). The tract at residues 108–124 (DILDLWIHHTQGYFPDW) is mediates dimerization, Nef-PTE1 interaction. The binding to ATP6V1H stretch occupies residues 148-179 (VEPEKEEANKGENTSLLHPVSLHGMDDPEREV). The short motif at 163 to 164 (LL) is the Dileucine internalization motif; necessary for CD4 internalization element. Residues 173-174 (DD) carry the Diacidic; necessary for CD4 internalization motif.

The protein belongs to the lentivirus primate group Nef protein family. As to quaternary structure, monomer; cytosolic form. Homodimer; membrane bound form. Interacts with Nef associated p21-activated kinase (PAK2); this interaction activates PAK2. Associates with the Nef-MHC-I-AP1 complex; this complex is required for MHC-I internalization. Interacts (via C-terminus) with host PI3-kinase. Interacts with host PACS1; this interaction seems to be weak. Interacts with host PACS2. Interacts with host LCK and MAPK3; these interactions inhibit the kinase activity of the latter. Interacts with host ATP6V1H; this interaction may play a role in CD4 endocytosis. Associates with the CD4-Nef-AP2 complex; this complex is required for CD4 internalization. Interacts with host AP2 subunit alpha and AP2 subunit sigma2. Interacts with TCR-zeta chain; this interaction up-regulates the Fas ligand (FasL) surface expression. Interacts with host HCK, LYN, and SRC; these interactions activate the Src family kinases. Interacts with MAP3K5; this interaction inhibits the Fas and TNFR-mediated death signals. Interacts with beta-COP and PTE1. Interacts with human RACK1; this increases Nef phosphorylation by PKC. Interacts with TP53; this interaction decreases the half-life of TP53, protecting the infected cell against p53-mediated apoptosis. Post-translationally, the virion-associated Nef proteins are cleaved by the viral protease to release the soluble C-terminal core protein. Nef is probably cleaved concomitantly with viral structural proteins on maturation of virus particles. In terms of processing, myristoylated. Phosphorylated on serine residues, probably by host PKCdelta and theta.

Its subcellular location is the host cell membrane. It localises to the virion. The protein localises to the secreted. It is found in the host Golgi apparatus membrane. Factor of infectivity and pathogenicity, required for optimal virus replication. Alters numerous pathways of T-lymphocyte function and down-regulates immunity surface molecules in order to evade host defense and increase viral infectivity. Alters the functionality of other immunity cells, like dendritic cells, monocytes/macrophages and NK cells. In terms of biological role, in infected CD4(+) T-lymphocytes, down-regulates the surface MHC-I, mature MHC-II, CD4, CD28, CCR5 and CXCR4 molecules. Mediates internalization and degradation of host CD4 through the interaction of with the cytoplasmic tail of CD4, the recruitment of AP-2 (clathrin adapter protein complex 2), internalization through clathrin coated pits, and subsequent transport to endosomes and lysosomes for degradation. Diverts host MHC-I molecules to the trans-Golgi network-associated endosomal compartments by an endocytic pathway to finally target them for degradation. MHC-I down-regulation may involve AP-1 (clathrin adapter protein complex 1) or possibly Src family kinase-ZAP70/Syk-PI3K cascade recruited by PACS2. In consequence infected cells are masked for immune recognition by cytotoxic T-lymphocytes. Decreasing the number of immune receptors also prevents reinfection by more HIV particles (superinfection). Down-regulates host SERINC3 and SERINC5 thereby excluding these proteins from the viral particles. Virion infectivity is drastically higher when SERINC3 or SERINC5 are excluded from the viral envelope, because these host antiviral proteins impair the membrane fusion event necessary for subsequent virion penetration. Its function is as follows. Bypasses host T-cell signaling by inducing a transcriptional program nearly identical to that of anti-CD3 cell activation. Interaction with TCR-zeta chain up-regulates the Fas ligand (FasL). Increasing surface FasL molecules and decreasing surface MHC-I molecules on infected CD4(+) cells send attacking cytotoxic CD8+ T-lymphocytes into apoptosis. Functionally, plays a role in optimizing the host cell environment for viral replication without causing cell death by apoptosis. Protects the infected cells from apoptosis in order to keep them alive until the next virus generation is ready to strike. Inhibits the Fas and TNFR-mediated death signals by blocking MAP3K5/ASK1. Decreases the half-life of TP53, protecting the infected cell against p53-mediated apoptosis. Inhibits the apoptotic signals regulated by the Bcl-2 family proteins through the formation of a Nef/PI3-kinase/PAK2 complex that leads to activation of PAK2 and induces phosphorylation of host BAD. Extracellular Nef protein targets CD4(+) T-lymphocytes for apoptosis by interacting with CXCR4 surface receptors. The protein is Protein Nef of Homo sapiens (Human).